The sequence spans 646 residues: MGKSCVVTSSFSLLLLFLQTLKYVHAGFICYGDFFNVNYGVSRTYLFSSLPSNVVSNGGFYNASFGRDSKNNRVHVVALCRRGYEKQACKTCLEHVIEDTKSKCPRQKESFSWVTDEFDDVSCSLRYTNHSTLGKLELLPNTINPNPNSIDSKFNNMAMFSQEWIAMVNRTLEAASTAENSSVLKYYSATRTEFTQISDVYALMQCVPDLSPGNCKRCLRECVNDFQKQFWGRQGGGVSRPSCYFRWDLYPYYRAFDNVVRVPAPPPQASSTIIDYGRDEKSFQGSNIAIIVVPSVINLIIFVVLIFSWKRKQSHTIINDVFDSNNGQSMLRFDLRMIVTATNNFSLENKLGQGGFGSVYKGILPSGQEIAVKRLRKGSGQGGMEFKNEVLLLTRLQHRNLVKLLGFCNEKDEEILVYEFVPNSSLDHFIFDEEKRRVLTWDVRYTIIEGVARGLLYLHEDSQLRIIHRDLKASNILLDAEMNPKVADFGMARLFDMDETRGQTSRVVGTYGYMAPEYATYGQFSTKSDVYSFGVMLLEMISGKSNKKLEKEEEEEEEELPAFVWKRWIEGRFAEIIDPLAAPSNNISINEVMKLIHIGLLCVQEDISKRPSINSILFWLERHATITMPVPTPVAYLTRPSLSLGH.

An N-terminal signal peptide occupies residues 1-26 (MGKSCVVTSSFSLLLLFLQTLKYVHA). 2 Gnk2-homologous domains span residues 27-132 (GFIC…NHST) and 142-252 (TINP…LYPY). Topologically, residues 27-287 (GFICYGDFFN…RDEKSFQGSN (261 aa)) are extracellular. 4 N-linked (GlcNAc...) asparagine glycosylation sites follow: Asn-62, Asn-129, Asn-169, and Asn-180. A helical transmembrane segment spans residues 288-308 (IAIIVVPSVINLIIFVVLIFS). Residues 309–646 (WKRKQSHTII…LTRPSLSLGH (338 aa)) lie on the Cytoplasmic side of the membrane. The Protein kinase domain maps to 345 to 626 (FSLENKLGQG…LFWLERHATI (282 aa)). ATP contacts are provided by residues 351 to 359 (LGQGGFGSV) and Lys-373. Position 418 is a phosphotyrosine (Tyr-418). Asp-470 serves as the catalytic Proton acceptor. Ser-474 is subject to Phosphoserine. Thr-510 bears the Phosphothreonine mark. Tyr-518 carries the phosphotyrosine modification.

The protein belongs to the protein kinase superfamily. Ser/Thr protein kinase family. CRK subfamily.

It localises to the membrane. The enzyme catalyses L-seryl-[protein] + ATP = O-phospho-L-seryl-[protein] + ADP + H(+). It carries out the reaction L-threonyl-[protein] + ATP = O-phospho-L-threonyl-[protein] + ADP + H(+). The chain is Cysteine-rich receptor-like protein kinase 37 (CRK37) from Arabidopsis thaliana (Mouse-ear cress).